The sequence spans 100 residues: NADH-quinone oxidoreductase subunit K (100 aa).

Transmembrane regions (helical) follow at residues 3–23 (PTSY…VGVI), 29–49 (LVLF…LVTF), and 60–80 (IVVF…LALL).

The protein belongs to the complex I subunit 4L family. NDH-1 is composed of 14 different subunits. Subunits NuoA, H, J, K, L, M, N constitute the membrane sector of the complex.

The protein resides in the cell membrane. The enzyme catalyses a quinone + NADH + 5 H(+)(in) = a quinol + NAD(+) + 4 H(+)(out). In terms of biological role, NDH-1 shuttles electrons from NADH, via FMN and iron-sulfur (Fe-S) centers, to quinones in the respiratory chain. The immediate electron acceptor for the enzyme in this species is believed to be ubiquinone. Couples the redox reaction to proton translocation (for every two electrons transferred, four hydrogen ions are translocated across the cytoplasmic membrane), and thus conserves the redox energy in a proton gradient. This Roseiflexus castenholzii (strain DSM 13941 / HLO8) protein is NADH-quinone oxidoreductase subunit K.